The chain runs to 417 residues: Acetyltransferase nanB (417 aa).

Residues 1–24 (MRPSTTTLSLLVFLISSILLATTG) form the signal peptide. Helical transmembrane passes span 150-170 (LAVS…LKNI), 284-304 (YLNN…FNWI), 307-327 (VQDG…GYFL), 356-376 (VGAL…VYPF), and 389-409 (FVDV…AAAL).

This sequence belongs to the wax synthase family.

Its subcellular location is the membrane. It functions in the pathway secondary metabolite biosynthesis. Functionally, acetyltransferase; part of the gene cluster that mediates the biosynthesis of the benzazepine alkaloid nanangelenin A which contains an unprecedented 3,4-dihydro-1-benzazepine-2,5-dione-N-prenyl-N-acetoxy-anthranilamide scaffold. The first step of nanangelenin biosynthesis is catalyzed by the indoleamine 2,3-dioxygenase nanC which produces N-formyl-kynurenine through the catabolism of tryptophan. The two-module NRPS nanA then utilizes anthranilate (Ant) and L-kynurenine (L-Kyn) to assemble the dipeptide product nanangelenin B. The first adenylation domain of nanA (A1) loads anthranilate onto the T1 domain, while A2 loads kynurenine, generated through spontaneous nonenzymatic deformylation of the nanC-supplied N-formyl-kynurenine. The peptide bond formation between the tethered amino acids is catalyzed by the first condensation domain (C1) between anthranilate's carbonyl carbon and kynurenine's aliphatic primary amine. The second C domain (C2) catalyzes the final cyclization event between the aromatic amine of kynurenine and the tethered carbonyl carbon, yielding nanangelenin B. The terminal T3 domain enhances the catalytic efficiency of C2, suggesting the T2-tethered Ant-L-Kyn is transferred to T3 prior to cyclization by C2. Once released from nanA, nanangelenin B is then prenylated by the prenyltransferase nanD to form nanangelenin C. Nanangelenin C is then N-hydroxylated by the FAD-dependent monooxygenase nanF and further acetylated by the acetyltransferase nanB to yield nanangelenin F. Finally, the N-methyltransferase nanE methylates the amide nitrogen of 1-benzazepine to convert nanangelenin F into nanangelenin A. NanE is also able to methylate most of the intermediates of the pathway such as nanangelenin B and nanangelenin C to produce nanangelenin D and nanangelenin E, respectively. The polypeptide is Acetyltransferase nanB (Aspergillus nanangensis).